Consider the following 269-residue polypeptide: Bis(5'-nucleosyl)-tetraphosphatase, symmetrical (269 aa).

This sequence belongs to the Ap4A hydrolase family.

It catalyses the reaction P(1),P(4)-bis(5'-adenosyl) tetraphosphate + H2O = 2 ADP + 2 H(+). Its function is as follows. Hydrolyzes diadenosine 5',5'''-P1,P4-tetraphosphate to yield ADP. The polypeptide is Bis(5'-nucleosyl)-tetraphosphatase, symmetrical (Vibrio vulnificus (strain YJ016)).